A 274-amino-acid chain; its full sequence is Diaminopimelate epimerase (274 aa).

Residues Asn-11, Gln-44, and Asn-64 each contribute to the substrate site. Cys-73 serves as the catalytic Proton donor. Residues 74-75 (GN), Asn-157, Asn-190, and 208-209 (ER) contribute to the substrate site. Catalysis depends on Cys-217, which acts as the Proton acceptor. 218–219 (GS) provides a ligand contact to substrate.

The protein belongs to the diaminopimelate epimerase family. In terms of assembly, homodimer.

The protein localises to the cytoplasm. It carries out the reaction (2S,6S)-2,6-diaminopimelate = meso-2,6-diaminopimelate. It functions in the pathway amino-acid biosynthesis; L-lysine biosynthesis via DAP pathway; DL-2,6-diaminopimelate from LL-2,6-diaminopimelate: step 1/1. Functionally, catalyzes the stereoinversion of LL-2,6-diaminopimelate (L,L-DAP) to meso-diaminopimelate (meso-DAP), a precursor of L-lysine and an essential component of the bacterial peptidoglycan. This is Diaminopimelate epimerase from Pectobacterium carotovorum subsp. carotovorum (strain PC1).